The primary structure comprises 134 residues: Terepressin/terephysin (134 aa).

The signal sequence occupies residues 1 to 33 (MKCSVLPRSRLSWTMCVLLLPLLMLMLEGGVQG). The cysteines at positions 34 and 39 are disulfide-linked. The propeptide occupies 44–50 (KRAVDSV). Cystine bridges form between C56/C100, C59/C73, C67/C90, C74/C80, C107/C121, C115/C133, and C122/C127.

It belongs to the vasopressin/oxytocin family. Contains 7 disulfide bonds. In terms of tissue distribution, expressed by the venom duct.

It localises to the secreted. The protein is Terepressin/terephysin of Terebra subulata (Chocolate spotted auger).